A 462-amino-acid polypeptide reads, in one-letter code: uncharacterized protein (462 aa).

This sequence belongs to the IIV-6 329R family.

This is an uncharacterized protein from Aedes vexans (Inland floodwater mosquito).